A 357-amino-acid chain; its full sequence is MRQHRIVLLPGDGIGPEITAVAKLLLDALGHQHGFKLNFEQHPIGGVAIDASGSPLPASTLEACQASDAVLLAAIGSPRFDALPREQRPETGLLSLRAGLKLFANLRPVTILPALIDASSLKANVIKGVDLMVVRELTGGIYFGQPKGRIEADGDERAFNTMTYSRTEVDRIAKVAFELARDRSGKLCSVDKANVLDVSQLWRDRVDALAANYGDVELSHMYVDNAAMQLVRNPRQFDVLLTGNLFGDILSDEAAMLTGSIGMLPSASLGSEGPGLFEPVHGSAPDIAGQDLANPMAMVLCAAMMLRIGLKENDAARALEGSVERVLAAGFRTGDLMSEGCTQLGCAEMGEQLLQAL.

Residues Arg97, Arg107, Arg135, and Asp224 each contribute to the substrate site. Residues Asp224, Asp248, and Asp252 each coordinate Mg(2+). Position 282–294 (Gly282–Asn294) interacts with NAD(+).

It belongs to the isocitrate and isopropylmalate dehydrogenases family. LeuB type 1 subfamily. As to quaternary structure, homodimer. Mg(2+) is required as a cofactor. The cofactor is Mn(2+).

The protein resides in the cytoplasm. It catalyses the reaction (2R,3S)-3-isopropylmalate + NAD(+) = 4-methyl-2-oxopentanoate + CO2 + NADH. Its pathway is amino-acid biosynthesis; L-leucine biosynthesis; L-leucine from 3-methyl-2-oxobutanoate: step 3/4. Its function is as follows. Catalyzes the oxidation of 3-carboxy-2-hydroxy-4-methylpentanoate (3-isopropylmalate) to 3-carboxy-4-methyl-2-oxopentanoate. The product decarboxylates to 4-methyl-2 oxopentanoate. The chain is 3-isopropylmalate dehydrogenase from Prochlorococcus marinus (strain MIT 9313).